The following is a 255-amino-acid chain: MNDYIVVKCGGSMLDQLNDVFFDCIKKLQQQYKVVIVHGGGPEIDAKLKDCNINVEKRDGLRVTPKEVMDVVQMVLCGSTNKKFVMNLQKHNLLAVGCSGCDGKLLQVQPVSEEIGYVGEVSYVETALLKGLINMNYIPVIAPIGIHDNEIYNINADTAAAGIAAALSAKELILITDVDGILHEGKLVKKTDESEIATFIEKGVITGGMIPKVQAALASLKMGVQKISIVNGTKDFTEDTGECIGTTVTRGVSIV.

Substrate-binding positions include 40–41 (GG), R62, and N153.

It belongs to the acetylglutamate kinase family. ArgB subfamily.

It is found in the cytoplasm. The enzyme catalyses N-acetyl-L-glutamate + ATP = N-acetyl-L-glutamyl 5-phosphate + ADP. It participates in amino-acid biosynthesis; L-arginine biosynthesis; N(2)-acetyl-L-ornithine from L-glutamate: step 2/4. In terms of biological role, catalyzes the ATP-dependent phosphorylation of N-acetyl-L-glutamate. The sequence is that of Acetylglutamate kinase from Bacillus thuringiensis subsp. konkukian (strain 97-27).